The sequence spans 324 residues: Beta-ketoacyl-[acyl-carrier-protein] synthase III (324 aa).

Active-site residues include C112 and H249. The interval Q250–R254 is ACP-binding. N279 is a catalytic residue.

Belongs to the thiolase-like superfamily. FabH family. In terms of assembly, homodimer.

It localises to the cytoplasm. The catalysed reaction is malonyl-[ACP] + acetyl-CoA + H(+) = 3-oxobutanoyl-[ACP] + CO2 + CoA. It functions in the pathway lipid metabolism; fatty acid biosynthesis. Catalyzes the condensation reaction of fatty acid synthesis by the addition to an acyl acceptor of two carbons from malonyl-ACP. Catalyzes the first condensation reaction which initiates fatty acid synthesis and may therefore play a role in governing the total rate of fatty acid production. Possesses both acetoacetyl-ACP synthase and acetyl transacylase activities. Its substrate specificity determines the biosynthesis of branched-chain and/or straight-chain of fatty acids. This chain is Beta-ketoacyl-[acyl-carrier-protein] synthase III, found in Streptococcus pneumoniae serotype 19F (strain G54).